Reading from the N-terminus, the 805-residue chain is U-box domain-containing protein 70 (805 aa).

TPR repeat units follow at residues 15–48 (ARRE…DPRD), 49–82 (ISFL…GREL), 90–127 (ARAL…HYSE), 129–153 (TLAK…DQEA), 154–187 (ADHH…NPKD), 189–221 (RVFS…DPTF), and 222–255 (LKGY…DPNN). Residues 136–160 (AEEARKEIEERERLDQEAADHHRDR) are disordered. The stretch at 341–417 (RKETEESLSR…VREVEELRQK (77 aa)) forms a coiled coil. Positions 445–711 (FSNSLKIGEG…GEVWAIVEAI (267 aa)) constitute a Protein kinase domain. ATP contacts are provided by residues 451 to 459 (IGEGGFGCV) and Lys472. Asp567 serves as the catalytic Proton acceptor. Positions 730-804 (SPPSYFICPI…QEWLQQHSMS (75 aa)) constitute a U-box domain.

The protein belongs to the protein kinase superfamily. Ser/Thr protein kinase family. As to quaternary structure, interacts with MODD.

It catalyses the reaction L-seryl-[protein] + ATP = O-phospho-L-seryl-[protein] + ADP + H(+). The enzyme catalyses L-threonyl-[protein] + ATP = O-phospho-L-threonyl-[protein] + ADP + H(+). The catalysed reaction is S-ubiquitinyl-[E2 ubiquitin-conjugating enzyme]-L-cysteine + [acceptor protein]-L-lysine = [E2 ubiquitin-conjugating enzyme]-L-cysteine + N(6)-ubiquitinyl-[acceptor protein]-L-lysine.. It functions in the pathway protein modification; protein ubiquitination. Functionally, functions as an E3 ubiquitin ligase. Is recruited by MODD to promote ubiquitination of BZIP46, a positive regulator of abscisic acid (ABA) signaling and drought stress tolerance. The sequence is that of U-box domain-containing protein 70 from Oryza sativa subsp. japonica (Rice).